Consider the following 306-residue polypeptide: Ribonuclease Z (306 aa).

7 residues coordinate Zn(2+): His63, His65, Asp67, His68, His142, Asp213, and His271. The active-site Proton acceptor is the Asp67.

The protein belongs to the RNase Z family. As to quaternary structure, homodimer. Zn(2+) serves as cofactor.

It catalyses the reaction Endonucleolytic cleavage of RNA, removing extra 3' nucleotides from tRNA precursor, generating 3' termini of tRNAs. A 3'-hydroxy group is left at the tRNA terminus and a 5'-phosphoryl group is left at the trailer molecule.. In terms of biological role, zinc phosphodiesterase, which displays some tRNA 3'-processing endonuclease activity. Probably involved in tRNA maturation, by removing a 3'-trailer from precursor tRNA. In Oceanobacillus iheyensis (strain DSM 14371 / CIP 107618 / JCM 11309 / KCTC 3954 / HTE831), this protein is Ribonuclease Z.